Here is a 545-residue protein sequence, read N- to C-terminus: Membrane protein insertase YidC (545 aa).

The next 4 membrane-spanning stretches (helical) occupy residues 350-370, 424-444, 461-481, and 498-518; these read IIGN…AVLY, LPML…FASV, ADPY…QTYL, and PLVF…YWVV.

Belongs to the OXA1/ALB3/YidC family. Type 1 subfamily. Interacts with the Sec translocase complex via SecD. Specifically interacts with transmembrane segments of nascent integral membrane proteins during membrane integration.

The protein resides in the cell inner membrane. Its function is as follows. Required for the insertion and/or proper folding and/or complex formation of integral membrane proteins into the membrane. Involved in integration of membrane proteins that insert both dependently and independently of the Sec translocase complex, as well as at least some lipoproteins. Aids folding of multispanning membrane proteins. In Neisseria meningitidis serogroup C (strain 053442), this protein is Membrane protein insertase YidC.